A 657-amino-acid polypeptide reads, in one-letter code: Glycogen debranching enzyme (657 aa).

The active-site Nucleophile is Asp336. The active-site Proton donor is Glu371. Residues 460-479 are disordered; sequence ANGEENRDGTNNNYSNNHGK.

This sequence belongs to the glycosyl hydrolase 13 family.

The enzyme catalyses Hydrolysis of (1-&gt;6)-alpha-D-glucosidic linkages to branches with degrees of polymerization of three or four glucose residues in limit dextrin.. Its pathway is glycan degradation; glycogen degradation. In terms of biological role, removes maltotriose and maltotetraose chains that are attached by 1,6-alpha-linkage to the limit dextrin main chain, generating a debranched limit dextrin. In Escherichia coli (strain UTI89 / UPEC), this protein is Glycogen debranching enzyme.